The following is a 195-amino-acid chain: Pyruvoyl-dependent arginine decarboxylase AaxB (195 aa).

Serine 53 bears the Pyruvic acid (Ser) mark.

The protein belongs to the pyruvoyl-dependent arginine decarboxylase family. In terms of assembly, trimer of an alpha-beta dimer. It depends on pyruvate as a cofactor.

The protein resides in the cytoplasm. The enzyme catalyses L-arginine + H(+) = agmatine + CO2. Its function is as follows. Part of the AaxABC system, catalyzes the decarboxylation of L-arginine. The arginine uptake by the bacterium in the macrophage may be a virulence factor against the host innate immune response. The chain is Pyruvoyl-dependent arginine decarboxylase AaxB (aaxB) from Chlamydia caviae (strain ATCC VR-813 / DSM 19441 / 03DC25 / GPIC) (Chlamydophila caviae).